Here is a 488-residue protein sequence, read N- to C-terminus: UDP-N-acetylmuramate--L-alanine ligase (488 aa).

122–128 (GTHGKTT) is a binding site for ATP.

The protein belongs to the MurCDEF family.

It localises to the cytoplasm. The catalysed reaction is UDP-N-acetyl-alpha-D-muramate + L-alanine + ATP = UDP-N-acetyl-alpha-D-muramoyl-L-alanine + ADP + phosphate + H(+). It functions in the pathway cell wall biogenesis; peptidoglycan biosynthesis. In terms of biological role, cell wall formation. The polypeptide is UDP-N-acetylmuramate--L-alanine ligase (Mycobacterium ulcerans (strain Agy99)).